Reading from the N-terminus, the 394-residue chain is Purine ribonucleoside efflux pump NepI (394 aa).

The Cytoplasmic segment spans residues 1–21 (MSEFIAENRGADAITRPNWSA). A helical membrane pass occupies residues 22-42 (VFSVAFCVACLIIVEFLPVSL). At 43–54 (LTPMAQDLGISE) the chain is on the periplasmic side. The chain crosses the membrane as a helical span at residues 55 to 75 (GVAGQSVTVTAFVAMFASLFI). Residues 76-85 (TQTIQATDRR) lie on the Cytoplasmic side of the membrane. The chain crosses the membrane as a helical span at residues 86–106 (YVVILFAVLLTISCLLVSFAN). Ser107 is a topological domain (periplasmic). A helical transmembrane segment spans residues 108–128 (FSLLLIGRACLGLALGGFWAM). At 129-147 (SASLTMRLVPPRTVPKALS) the chain is on the cytoplasmic side. The helical transmembrane segment at 148–168 (VIFGAVSIALVIAAPLGSFLG) threads the bilayer. Topologically, residues 169–175 (ELIGWRN) are periplasmic. The helical transmembrane segment at 176–196 (VFNAAAVMGVLCIFWIIKSLP) threads the bilayer. Residues 197 to 215 (SLPGKPSHQKQNTFRLLQR) are Cytoplasmic-facing. A helical membrane pass occupies residues 216–236 (PGVMAGMIAIFMSFAGQFAFF). Residues 237 to 255 (TYIRPVYMNLAGFGVDGLT) lie on the Periplasmic side of the membrane. Residues 256 to 276 (LVLLSFGIASFIGTSLSSFIL) form a helical membrane-spanning segment. Residues 277-281 (KRSVK) lie on the Cytoplasmic side of the membrane. A helical membrane pass occupies residues 282 to 302 (LALAGAPLILAVSALVLTLCG). At 303 to 305 (SDK) the chain is on the periplasmic side. A helical membrane pass occupies residues 306–326 (IVATGVAIIWGLTFALVPVGW). At 327–343 (STWSTRSLADQAEKAGS) the chain is on the cytoplasmic side. The chain crosses the membrane as a helical span at residues 344–364 (IQVAVIQLANTCGAAIGGYAL). Residues 365 to 366 (DN) lie on the Periplasmic side of the membrane. A helical transmembrane segment spans residues 367 to 387 (IGLTSPLMLSGTLMLLTALLV). Over 388–394 (TAKVKMK) the chain is Cytoplasmic.

The protein belongs to the major facilitator superfamily. DHA1 family. NepI (TC 2.A.1.2.26) subfamily.

The protein resides in the cell inner membrane. The enzyme catalyses inosine(in) + H(+)(out) = inosine(out) + H(+)(in). The catalysed reaction is guanosine(in) + H(+)(out) = guanosine(out) + H(+)(in). Functionally, involved in the efflux of purine ribonucleosides, such as inosine and guanosine. The chain is Purine ribonucleoside efflux pump NepI from Shigella dysenteriae serotype 1 (strain Sd197).